Here is a 393-residue protein sequence, read N- to C-terminus: Protein FAM53C (393 aa).

Methionine 1 is subject to N-acetylmethionine. The tract at residues 77–120 (HLRPPSRGNSPKEPPLSQVLSPEPPDPEKLPVPPAPPSKRHCRS) is disordered. A phosphoserine mark is found at serine 122 and serine 162. 2 disordered regions span residues 141 to 167 (LWTPIKHRGNAGGGGPQVPQQSPPKRV) and 204 to 283 (QPCA…ARKT). Positions 204-215 (QPCATSPQSGSW) are enriched in polar residues. 5 positions are modified to phosphoserine: serine 232, serine 234, serine 255, serine 273, and serine 299. Low complexity predominate over residues 241-256 (ASRFLPSARSSPASSP). A compositionally biased stretch (low complexity) spans 343–355 (SCSPVEGSSQVLS). The disordered stretch occupies residues 343 to 365 (SCSPVEGSSQVLSESEEEEEGSV).

This sequence belongs to the FAM53 family.

This chain is Protein FAM53C, found in Mus musculus (Mouse).